The primary structure comprises 277 residues: Probable endonuclease LCL3 (277 aa).

Residues 39–56 traverse the membrane as a helical segment; sequence WIAPIIAAGATMGFWSFY. The TNase-like domain occupies 77 to 239; it reads RSLFGKVTSV…RQKGKGMWSL (163 aa). The active site involves R126. Residue D131 participates in Ca(2+) binding. Catalysis depends on residues E134 and R174.

This sequence belongs to the LCL3 family.

It is found in the mitochondrion. The protein localises to the membrane. The polypeptide is Probable endonuclease LCL3 (LCL3) (Podospora anserina (strain S / ATCC MYA-4624 / DSM 980 / FGSC 10383) (Pleurage anserina)).